Reading from the N-terminus, the 259-residue chain is Energy-coupling factor transporter ATP-binding protein EcfA1 (259 aa).

The ABC transporter domain occupies 3-230 (ITLNSVSFRY…EFDDVEIPFK (228 aa)). 38-43 (GSGKTT) is an ATP binding site. E157 serves as the catalytic Proton acceptor.

This sequence belongs to the ABC transporter superfamily. Energy-coupling factor EcfA family. Forms a heterodimer with EcfA2. Forms a stable energy-coupling factor (ECF) transporter complex composed of 2 membrane-embedded substrate-binding proteins (S component, RibU, BioY), 2 ATP-binding proteins (A component) and 2 transmembrane proteins (T component) upon coexpression in E.coli. Stable subcomplexes with both A plus T components can also be isolated. This complex interacts with at least 2 substrate-specific components, BioY and RibU.

It is found in the cell inner membrane. ATP-binding (A) component of a common energy-coupling factor (ECF) ABC-transporter complex. Unlike classic ABC transporters this ECF transporter provides the energy necessary to transport a number of different substrates. Expression of the complex plus RibU in E.coli allows riboflavin uptake; uptake does not occur in the absence of RibU or the EcfA1A2T complex. The polypeptide is Energy-coupling factor transporter ATP-binding protein EcfA1 (Thermotoga maritima (strain ATCC 43589 / DSM 3109 / JCM 10099 / NBRC 100826 / MSB8)).